Reading from the N-terminus, the 91-residue chain is Metalloproteinase inhibitor 2 (91 aa).

The NTR domain occupies K1 to T91.

Belongs to the protease inhibitor I35 (TIMP) family. The activity of TIMP2 is dependent on the presence of disulfide bonds.

The protein resides in the secreted. Its function is as follows. Complexes with metalloproteinases (such as collagenases) and irreversibly inactivates them. This chain is Metalloproteinase inhibitor 2 (TIMP2), found in Equus caballus (Horse).